Reading from the N-terminus, the 534-residue chain is Nuclear polyadenylated RNA-binding protein 4 (534 aa).

The tract at residues 1–154 (MSSDEEDFND…TKEERSKADL (154 aa)) is disordered. 2 positions are modified to phosphoserine: Ser-2 and Ser-3. Residues 13–30 (GDDKPTTTEEVKKEEEQN) are compositionally biased toward basic and acidic residues. The span at 37–78 (SQLDQLAALQALSSSLNKLNNPNSNNSSSNNSNQDTSSSKQD) shows a compositional bias: low complexity. 2 positions are modified to phosphoserine: Ser-51 and Ser-87. The segment covering 81 to 98 (ANDKEGSNEDTKNEKKQE) has biased composition (basic and acidic residues). Composition is skewed to low complexity over residues 99–112 (SATS…ASSA) and 121–144 (QLQQ…QVTQ). Residues 145-154 (TKEERSKADL) show a composition bias toward basic and acidic residues. RRM domains follow at residues 159–241 (CKMF…EQDK) and 243–320 (GKIF…RAEP). Position 206 is a phosphoserine (Ser-206). Disordered stretches follow at residues 316 to 354 (KRAE…DFNQ) and 415 to 534 (MPPN…PYNR). Positions 336 to 354 (GNNMNRRGGNFGNQGDFNQ) are enriched in low complexity. The span at 420-459 (MTLNQPQQDSNATQGSPAPSDSDNNKSNDVQTIGNTSNTD) shows a compositional bias: polar residues. Thr-458 is subject to Phosphothreonine. Ser-460 and Ser-462 each carry phosphoserine. Positions 460 to 475 (SGSPPLNLPNGPKGPS) are enriched in low complexity. A compositionally biased stretch (basic and acidic residues) spans 478-505 (NDDHNSGYGYNRDRGDRDRNDRDRDYNH). The residue at position 519 (Arg-519) is an Omega-N-methylarginine. The span at 523-534 (NRRNNGYHPYNR) shows a compositional bias: low complexity.

As to quaternary structure, interacts with NAM7. Post-translationally, methylated by HMT1. The methylation is required for nuclear export.

It is found in the cytoplasm. Its subcellular location is the nucleus. The protein resides in the stress granule. RNA-binding protein, which is involved in the polyadenylation-dependent pre-mRNA 3'-end formation and cooperates with the cleavage factor CFIA complex and the cleavage and polyadenylation factor (CPF) complex. May be involved in regulation of poly(A) site selection. Is involved in nonsense-mediated mRNA decay. Seems to bind to an RNA downstream sequence element (DSE) located 3' of a nonsense codon and may mark the transcript for decay. The protein is Nuclear polyadenylated RNA-binding protein 4 of Saccharomyces cerevisiae (strain ATCC 204508 / S288c) (Baker's yeast).